A 552-amino-acid polypeptide reads, in one-letter code: Threonylcarbamoyladenosine tRNA methylthiotransferase (552 aa).

The tract at residues Y31–T61 is disordered. The region spanning Q71–K178 is the MTTase N-terminal domain. Positions 80, 115, 144, 221, 225, and 228 each coordinate [4Fe-4S] cluster. One can recognise a Radical SAM core domain in the interval R207–A438. In terms of domain architecture, TRAM spans A438–D500. A helical membrane pass occupies residues F532–L552.

It belongs to the methylthiotransferase family. CDKAL1 subfamily. It depends on [4Fe-4S] cluster as a cofactor.

It is found in the membrane. It carries out the reaction N(6)-L-threonylcarbamoyladenosine(37) in tRNA + (sulfur carrier)-SH + AH2 + 2 S-adenosyl-L-methionine = 2-methylsulfanyl-N(6)-L-threonylcarbamoyladenosine(37) in tRNA + (sulfur carrier)-H + 5'-deoxyadenosine + L-methionine + A + S-adenosyl-L-homocysteine + 2 H(+). Catalyzes the methylthiolation of N6-threonylcarbamoyladenosine (t(6)A), leading to the formation of 2-methylthio-N6-threonylcarbamoyladenosine (ms(2)t(6)A) at position 37 in tRNAs that read codons beginning with adenine. The sequence is that of Threonylcarbamoyladenosine tRNA methylthiotransferase from Drosophila melanogaster (Fruit fly).